A 273-amino-acid polypeptide reads, in one-letter code: Phosphate import ATP-binding protein PstB (273 aa).

An ABC transporter domain is found at I18–N257. ATP is bound at residue G50 to S57.

The protein belongs to the ABC transporter superfamily. Phosphate importer (TC 3.A.1.7) family. In terms of assembly, the complex is composed of two ATP-binding proteins (PstB), two transmembrane proteins (PstC and PstA) and a solute-binding protein (PstS).

The protein localises to the cell inner membrane. The enzyme catalyses phosphate(out) + ATP + H2O = ADP + 2 phosphate(in) + H(+). Part of the ABC transporter complex PstSACB involved in phosphate import. Responsible for energy coupling to the transport system. The polypeptide is Phosphate import ATP-binding protein PstB (Prochlorococcus marinus (strain SARG / CCMP1375 / SS120)).